The sequence spans 323 residues: Formimidoylglutamase (323 aa).

Residues H131, D157, H159, D161, C245, and D247 each coordinate Mn(2+).

Belongs to the arginase family. The cofactor is Mn(2+).

It carries out the reaction N-formimidoyl-L-glutamate + H2O = formamide + L-glutamate. The protein operates within amino-acid degradation; L-histidine degradation into L-glutamate; L-glutamate from N-formimidoyl-L-glutamate (hydrolase route): step 1/1. In terms of biological role, catalyzes the conversion of N-formimidoyl-L-glutamate to L-glutamate and formamide. The protein is Formimidoylglutamase of Geobacillus kaustophilus (strain HTA426).